A 256-amino-acid polypeptide reads, in one-letter code: Protein FixA (256 aa).

The protein belongs to the ETF beta-subunit/FixA family. As to quaternary structure, heterodimer of FixA and FixB.

It functions in the pathway amine and polyamine metabolism; carnitine metabolism. Its function is as follows. Required for anaerobic carnitine reduction. May bring reductant to CaiA. This chain is Protein FixA, found in Escherichia coli O17:K52:H18 (strain UMN026 / ExPEC).